The chain runs to 127 residues: Large ribosomal subunit protein bL21 (127 aa).

The protein belongs to the bacterial ribosomal protein bL21 family. In terms of assembly, part of the 50S ribosomal subunit. Contacts protein L20.

Functionally, this protein binds to 23S rRNA in the presence of protein L20. This is Large ribosomal subunit protein bL21 from Synechococcus sp. (strain ATCC 27144 / PCC 6301 / SAUG 1402/1) (Anacystis nidulans).